The following is a 204-amino-acid chain: Demethylsterigmatocystin 6-O-methyltransferase stcP (204 aa).

S-adenosyl-L-methionine is bound by residues 48 to 49, Asp73, 93 to 94, and Arg109; these read GG and DF. The active-site Proton acceptor is the His113.

It belongs to the class I-like SAM-binding methyltransferase superfamily. Cation-independent O-methyltransferase family.

The catalysed reaction is 6-demethylsterigmatocystin + S-adenosyl-L-methionine = sterigmatocystin + S-adenosyl-L-homocysteine + H(+). The protein operates within mycotoxin biosynthesis; sterigmatocystin biosynthesis. Functionally, norsolorinic acid reductase; part of the gene cluster that mediates the biosynthesis of sterigmatocystin (ST), a polyketide-derived furanocoumarin which is part of the most toxic and carcinogenic compounds among the known mycotoxins. The first step in the biosynthesis of sterigmatocystin is the production of hexanoate by the fatty acid synthase (FAS) units stcJ and stcK. The polyketide backbone is assembled by the non-reducing polyketide synthase stcA by condensation of the starter hexanoyl-CoA and 7 malonyl-CoA extender units followed by cyclization and release of norsolorinic acid. Norsolorinic acid is the first stable intermediate in the biosynthesis of sterigmatocystin and is converted into averantin (AVN) by the ketoreductase stcE which reduces the hexanoate ketone to an alcohol. Averantin is then oxidized into 5'-hydroxyaverantin (HAVN) by the cytochrome P450 monooxygenase stcF. 5'-hydroxyaverantin is further converted to 5'-oxyaverantin (OAVN) by the 5'-hydroxyaverantin dehydrogenase stcG. The next step is the conversion of OAVN into averufin (AVF) which is catalyzed by a yet to be identified enzyme. The cytochrome P450 monooxygenase stcB and the flavin-binding monooxygenase stcW are both required for the conversion of averufin to 1-hydroxyversicolorone. The esterase stcI probably catalyzes the formation of versiconal hemiacetal acetate from 1-hydroxyversicolorone. The oxydoreductase stcN then probably catalyzes the biosynthetic step from versiconal to versicolorin B (VERB). The next step is performed by the versicolorin B desaturase stcL to produce versicolorin A (VERA). The ketoreductase stcU and the cytochrome P450 monooxygenase stcS are involved in the conversion of versicolorin A to demethylsterigmatocystin. The Baeyer-Villiger oxidas stcQ and the reductase stcR might be involved in the biosynthetic step from versicolorin A to demethylsterigmatocystin. The final step in the biosynthesis of sterigmatocystin is the methylation of demethylsterigmatocystin catalyzed by the methyltransferase stcP. The protein is Demethylsterigmatocystin 6-O-methyltransferase stcP of Emericella nidulans (strain FGSC A4 / ATCC 38163 / CBS 112.46 / NRRL 194 / M139) (Aspergillus nidulans).